We begin with the raw amino-acid sequence, 305 residues long: Insulin-like peptide (305 aa).

A signal peptide spans 1 to 22 (MNLSSVYVLASLAVVCLLVKET). 3 disulfide bridges follow: Cys-28-Cys-87, Cys-40-Cys-100, and Cys-86-Cys-91. Residues 52-76 (SVSKRAIDFISEQQAKDYMGAMPHI) constitute a propeptide, connecting peptide. A d region spans residues 102 to 114 (PYSTAPATATPVR). Residues 102 to 305 (PYSTAPATAT…RDSYHLTELR (204 aa)) constitute a propeptide, d/E peptide. The segment covering 107-118 (PATATPVRTTEP) has biased composition (low complexity). Disordered stretches follow at residues 107–130 (PATA…PLDG) and 236–305 (HNQT…TELR). The interval 115–305 (TTEPQPEEAE…RDSYHLTELR (191 aa)) is e. Positions 119–128 (QPEEAEDDPL) are enriched in acidic residues. Composition is skewed to basic and acidic residues over residues 236–245 (HNQTDKKEPT) and 291–305 (RRIE…TELR).

It belongs to the insulin family.

It localises to the secreted. This Branchiostoma californiense (California lancelet) protein is Insulin-like peptide (ILP).